Here is a 239-residue protein sequence, read N- to C-terminus: Orotidine 5'-phosphate decarboxylase (239 aa).

Substrate is bound by residues Asp-10, Lys-32, 59–68, Thr-122, Arg-184, Gln-193, Gly-213, and Arg-214; that span reads DLKLHDIPNT. Lys-61 functions as the Proton donor in the catalytic mechanism.

This sequence belongs to the OMP decarboxylase family. Type 1 subfamily. Homodimer.

The catalysed reaction is orotidine 5'-phosphate + H(+) = UMP + CO2. The protein operates within pyrimidine metabolism; UMP biosynthesis via de novo pathway; UMP from orotate: step 2/2. Catalyzes the decarboxylation of orotidine 5'-monophosphate (OMP) to uridine 5'-monophosphate (UMP). The polypeptide is Orotidine 5'-phosphate decarboxylase (Geobacillus sp. (strain WCH70)).